Here is a 122-residue protein sequence, read N- to C-terminus: Small ribosomal subunit protein uS13 (122 aa).

The interval 95–122 (GLPVRGQKTKTNARTRKGPKRTVANKKK) is disordered.

It belongs to the universal ribosomal protein uS13 family. Part of the 30S ribosomal subunit. Forms a loose heterodimer with protein S19. Forms two bridges to the 50S subunit in the 70S ribosome.

Functionally, located at the top of the head of the 30S subunit, it contacts several helices of the 16S rRNA. In the 70S ribosome it contacts the 23S rRNA (bridge B1a) and protein L5 of the 50S subunit (bridge B1b), connecting the 2 subunits; these bridges are implicated in subunit movement. Contacts the tRNAs in the A and P-sites. This Lachnoclostridium phytofermentans (strain ATCC 700394 / DSM 18823 / ISDg) (Clostridium phytofermentans) protein is Small ribosomal subunit protein uS13.